Consider the following 64-residue polypeptide: Conotoxin Pn-B01121 (64 aa).

A signal peptide spans 1 to 22 (MCCLPVFVILLLLIASAPSVDA). A propeptide spanning residues 23-48 (LPKTKDDMSLASFHDNAKRTLQILSN) is cleaved from the precursor. Trp63 carries the post-translational modification Tryptophan amide.

This sequence belongs to the conotoxin T superfamily. In terms of processing, contains 2 disulfide bonds that can be either 'C1-C3, C2-C4' or 'C1-C4, C2-C3', since these disulfide connectivities have been observed for conotoxins with cysteine framework V (for examples, see AC P0DQQ7 and AC P81755). Expressed by the venom duct.

The protein resides in the secreted. This is Conotoxin Pn-B01121 from Conus pennaceus (Feathered cone).